A 280-amino-acid chain; its full sequence is Shikimate kinase (280 aa).

74 to 84 (PGGSGLGSSSA) provides a ligand contact to ATP.

It belongs to the GHMP kinase family. Archaeal shikimate kinase subfamily.

Its subcellular location is the cytoplasm. The catalysed reaction is shikimate + ATP = 3-phosphoshikimate + ADP + H(+). Its pathway is metabolic intermediate biosynthesis; chorismate biosynthesis; chorismate from D-erythrose 4-phosphate and phosphoenolpyruvate: step 5/7. This chain is Shikimate kinase (aroK), found in Archaeoglobus fulgidus (strain ATCC 49558 / DSM 4304 / JCM 9628 / NBRC 100126 / VC-16).